Reading from the N-terminus, the 247-residue chain is Peptidyl-prolyl cis-trans isomerase FKBP17-2, chloroplastic (247 aa).

A chloroplast-targeting transit peptide spans 1–79 (MANLFTATAP…SSLTRRFGIG (79 aa)). A disordered region spans residues 26-64 (QCYASSSNPPEPESSSPPPPPPPPQPLASQQKRKKNVET). Over residues 34 to 51 (PPEPESSSPPPPPPPPQP) the composition is skewed to pro residues. One can recognise a PPIase FKBP-type domain in the interval 141–243 (GDLVVIDLKG…EYIVEIDRVS (103 aa)).

It belongs to the FKBP-type PPIase family.

Its subcellular location is the plastid. It is found in the chloroplast thylakoid lumen. The catalysed reaction is [protein]-peptidylproline (omega=180) = [protein]-peptidylproline (omega=0). Its function is as follows. PPIases accelerate the folding of proteins. It catalyzes the cis-trans isomerization of proline imidic peptide bonds in oligopeptides. This is Peptidyl-prolyl cis-trans isomerase FKBP17-2, chloroplastic (FKBP17-2) from Arabidopsis thaliana (Mouse-ear cress).